A 179-amino-acid chain; its full sequence is ATP-dependent protease subunit HslV (179 aa).

The active site involves Thr8. The Na(+) site is built by Gly163, Cys166, and Thr169.

It belongs to the peptidase T1B family. HslV subfamily. In terms of assembly, a double ring-shaped homohexamer of HslV is capped on each side by a ring-shaped HslU homohexamer. The assembly of the HslU/HslV complex is dependent on binding of ATP.

The protein resides in the cytoplasm. The catalysed reaction is ATP-dependent cleavage of peptide bonds with broad specificity.. With respect to regulation, allosterically activated by HslU binding. Its function is as follows. Protease subunit of a proteasome-like degradation complex believed to be a general protein degrading machinery. This chain is ATP-dependent protease subunit HslV, found in Solibacter usitatus (strain Ellin6076).